The following is a 386-amino-acid chain: Cytotoxic granule associated RNA binding protein TIA1 (386 aa).

Met-1 is subject to N-acetylmethionine. RRM domains lie at 7 to 83, 106 to 184, and 214 to 286; these read KTLY…WATT, FHVF…WATR, and CTVY…WGKE. The disordered stretch occupies residues 355 to 376; that stretch reads GPNYSVPPPQGQNGSMLPSQPA.

Homooligomer; homooligomerization is induced by Zn(2+). Interacts with FASTK; the interactions leads to its phosphorylation. Interacts (via RRM1 and the C-terminal glutamine-rich (Q) sequence) with SNRPC/U1-C (via N-terminus); thereby facilitating spliceosomal U1 snRNP recruitment to 5' splice sites. Phosphorylatedby FASTK; phosphorylation occurs after FAS ligation in FAS-mediated apoptosis and before DNA fragmentation.

Its subcellular location is the nucleus. The protein localises to the cytoplasm. The protein resides in the stress granule. Its function is as follows. RNA-binding protein involved in the regulation of alternative pre-RNA splicing and mRNA translation by binding to uridine-rich (U-rich) RNA sequences. Binds to U-rich sequences immediately downstream from a 5' splice sites in a uridine-rich small nuclear ribonucleoprotein (U snRNP)-dependent fashion, thereby modulating alternative pre-RNA splicing. Preferably binds to the U-rich IAS1 sequence in a U1 snRNP-dependent manner; this binding is optimal if a 5' splice site is adjacent to IAS1. Activates the use of heterologous 5' splice sites; the activation depends on the intron sequence downstream from the 5' splice site, with a preference for a downstream U-rich sequence. By interacting with SNRPC/U1-C, promotes recruitment and binding of spliceosomal U1 snRNP to 5' splice sites followed by U-rich sequences, thereby facilitating atypical 5' splice site recognition by U1 snRNP. Activates splicing of alternative exons with weak 5' splice sites followed by a U-rich stretch on its own pre-mRNA and on TIAR mRNA. Acts as a modulator of alternative splicing for the apoptotic FAS receptor, thereby promoting apoptosis. Binds to the 5' splice site region of FAS intron 5 to promote accumulation of transcripts that include exon 6 at the expense of transcripts in which exon 6 is skipped, thereby leading to the transcription of a membrane-bound apoptotic FAS receptor, which promotes apoptosis. Binds to a conserved AU-rich cis element in COL2A1 intron 2 and modulates alternative splicing of COL2A1 exon 2. Also binds to the equivalent AT-rich element in COL2A1 genomic DNA, and may thereby be involved in the regulation of transcription. Involved in the repression of mRNA translation by binding to AU-rich elements (AREs) located in mRNA 3' untranslated regions (3' UTRs), including target ARE-bearing mRNAs encoding TNF and PTGS2. Also participates in the cellular response to environmental stress, by acting downstream of the stress-induced phosphorylation of EIF2S1/EIF2A to promote the recruitment of untranslated mRNAs to cytoplasmic stress granules (SGs), leading to stress-induced translational arrest. Formation and recruitment to SGs is regulated by Zn(2+). Possesses nucleolytic activity against cytotoxic lymphocyte target cells. This Mus musculus (Mouse) protein is Cytotoxic granule associated RNA binding protein TIA1 (Tia1).